The sequence spans 60 residues: Cytochrome c oxidase subunit 7, mitochondrial (60 aa).

The Mitochondrial matrix segment spans residues 2 to 29 (ANKVIQLQKIFQSSTKPLWWRHPRSALY). The helical transmembrane segment at 30 to 53 (LYPFYAIFAVAVVTPLLYIPNAIR) threads the bilayer. Topologically, residues 54 to 60 (GIKAKKA) are mitochondrial intermembrane.

Belongs to the cytochrome c oxidase VIIa family. In terms of assembly, component of the cytochrome c oxidase (complex IV, CIV), a multisubunit enzyme composed of 12 subunits. The complex is composed of a catalytic core of 3 subunits COX1, COX2 and COX3, encoded in the mitochondrial DNA, and 9 supernumerary subunits COX4, COX5A (or COX5B), COX6, COX7, COX8, COX9, COX12, COX13 and COX26, which are encoded in the nuclear genome. The complex exists as a monomer or a dimer and forms supercomplexes (SCs) in the inner mitochondrial membrane with a dimer of ubiquinol-cytochrome c oxidoreductase (cytochrome b-c1 complex, complex III, CIII), resulting in 2 different assemblies (supercomplexes III(2)IV and III(2)IV(2)).

The protein localises to the mitochondrion inner membrane. Its pathway is energy metabolism; oxidative phosphorylation. Its function is as follows. Component of the cytochrome c oxidase, the last enzyme in the mitochondrial electron transport chain which drives oxidative phosphorylation. The respiratory chain contains 3 multisubunit complexes succinate dehydrogenase (complex II, CII), ubiquinol-cytochrome c oxidoreductase (cytochrome b-c1 complex, complex III, CIII) and cytochrome c oxidase (complex IV, CIV), that cooperate to transfer electrons derived from NADH and succinate to molecular oxygen, creating an electrochemical gradient over the inner membrane that drives transmembrane transport and the ATP synthase. Cytochrome c oxidase is the component of the respiratory chain that catalyzes the reduction of oxygen to water. Electrons originating from reduced cytochrome c in the intermembrane space (IMS) are transferred via the dinuclear copper A center (CU(A)) of COX2 and heme A of COX1 to the active site in COX1, a binuclear center (BNC) formed by heme A3 and copper B (CU(B)). The BNC reduces molecular oxygen to 2 water molecules using 4 electrons from cytochrome c in the IMS and 4 protons from the mitochondrial matrix. This chain is Cytochrome c oxidase subunit 7, mitochondrial (COX7), found in Saccharomyces cerevisiae (strain ATCC 204508 / S288c) (Baker's yeast).